The primary structure comprises 327 residues: Phenylalanine--tRNA ligase alpha subunit (327 aa).

Glu-252 serves as a coordination point for Mg(2+).

This sequence belongs to the class-II aminoacyl-tRNA synthetase family. Phe-tRNA synthetase alpha subunit type 1 subfamily. As to quaternary structure, tetramer of two alpha and two beta subunits. It depends on Mg(2+) as a cofactor.

The protein localises to the cytoplasm. The catalysed reaction is tRNA(Phe) + L-phenylalanine + ATP = L-phenylalanyl-tRNA(Phe) + AMP + diphosphate + H(+). The protein is Phenylalanine--tRNA ligase alpha subunit of Shigella sonnei (strain Ss046).